Reading from the N-terminus, the 243-residue chain is UPF0758 protein SYNPCC7002_A0220 (243 aa).

The 124-residue stretch at 112–235 (IIVDSPEAAA…FGSLRQKTAL (124 aa)) folds into the MPN domain. 3 residues coordinate Zn(2+): H184, H186, and D197. The short motif at 184–197 (HNHPSGNVDPSPED) is the JAMM motif element.

Belongs to the UPF0758 family.

In Picosynechococcus sp. (strain ATCC 27264 / PCC 7002 / PR-6) (Agmenellum quadruplicatum), this protein is UPF0758 protein SYNPCC7002_A0220.